Reading from the N-terminus, the 383-residue chain is Putative glutamate--cysteine ligase 2 (383 aa).

Belongs to the glutamate--cysteine ligase type 2 family. YbdK subfamily.

The enzyme catalyses L-cysteine + L-glutamate + ATP = gamma-L-glutamyl-L-cysteine + ADP + phosphate + H(+). Its function is as follows. ATP-dependent carboxylate-amine ligase which exhibits weak glutamate--cysteine ligase activity. The chain is Putative glutamate--cysteine ligase 2 from Clavibacter michiganensis subsp. michiganensis (strain NCPPB 382).